The chain runs to 125 residues: Large ribosomal subunit protein bL12 (125 aa).

The protein belongs to the bacterial ribosomal protein bL12 family. As to quaternary structure, homodimer. Part of the ribosomal stalk of the 50S ribosomal subunit. Forms a multimeric L10(L12)X complex, where L10 forms an elongated spine to which 2 to 4 L12 dimers bind in a sequential fashion. Binds GTP-bound translation factors.

In terms of biological role, forms part of the ribosomal stalk which helps the ribosome interact with GTP-bound translation factors. Is thus essential for accurate translation. The chain is Large ribosomal subunit protein bL12 from Variovorax paradoxus (strain S110).